A 293-amino-acid chain; its full sequence is uncharacterized protein (293 aa).

Disordered stretches follow at residues 1-23 (MGWP…AQTD) and 52-83 (ELQS…SELS). Residues 8–17 (KPEDSKEEHG) show a composition bias toward basic and acidic residues. Residues 52 to 71 (ELQSYSHTSESPVETKTPTT) are compositionally biased toward polar residues.

This is an uncharacterized protein from Mus musculus (Mouse).